Reading from the N-terminus, the 423-residue chain is Serine hydroxymethyltransferase (423 aa).

Residues Leu120 and 124–126 (GHL) each bind (6S)-5,6,7,8-tetrahydrofolate. At Lys229 the chain carries N6-(pyridoxal phosphate)lysine. Residue 353–355 (SPF) coordinates (6S)-5,6,7,8-tetrahydrofolate.

This sequence belongs to the SHMT family. As to quaternary structure, homodimer. It depends on pyridoxal 5'-phosphate as a cofactor.

The protein localises to the cytoplasm. The enzyme catalyses (6R)-5,10-methylene-5,6,7,8-tetrahydrofolate + glycine + H2O = (6S)-5,6,7,8-tetrahydrofolate + L-serine. The protein operates within one-carbon metabolism; tetrahydrofolate interconversion. It participates in amino-acid biosynthesis; glycine biosynthesis; glycine from L-serine: step 1/1. Functionally, catalyzes the reversible interconversion of serine and glycine with tetrahydrofolate (THF) serving as the one-carbon carrier. This reaction serves as the major source of one-carbon groups required for the biosynthesis of purines, thymidylate, methionine, and other important biomolecules. Also exhibits THF-independent aldolase activity toward beta-hydroxyamino acids, producing glycine and aldehydes, via a retro-aldol mechanism. The chain is Serine hydroxymethyltransferase from Prochlorococcus marinus subsp. pastoris (strain CCMP1986 / NIES-2087 / MED4).